The chain runs to 256 residues: Alcohol dehydrogenase (256 aa).

NAD(+) is bound at residue 12–35; sequence FVAGLGGIGLDTSKELVKRDLKNL. Residue serine 140 coordinates substrate. The active-site Proton acceptor is the tyrosine 153.

The protein belongs to the short-chain dehydrogenases/reductases (SDR) family. In terms of assembly, homodimer.

It carries out the reaction a primary alcohol + NAD(+) = an aldehyde + NADH + H(+). It catalyses the reaction a secondary alcohol + NAD(+) = a ketone + NADH + H(+). The chain is Alcohol dehydrogenase (Adh) from Drosophila teissieri (Fruit fly).